We begin with the raw amino-acid sequence, 150 residues long: D-aminoacyl-tRNA deacylase (150 aa).

The Gly-cisPro motif, important for rejection of L-amino acids signature appears at 140–141 (GP).

The protein belongs to the DTD family. Homodimer.

The protein resides in the cytoplasm. It catalyses the reaction glycyl-tRNA(Ala) + H2O = tRNA(Ala) + glycine + H(+). It carries out the reaction a D-aminoacyl-tRNA + H2O = a tRNA + a D-alpha-amino acid + H(+). Its function is as follows. An aminoacyl-tRNA editing enzyme that deacylates mischarged D-aminoacyl-tRNAs. Also deacylates mischarged glycyl-tRNA(Ala), protecting cells against glycine mischarging by AlaRS. Acts via tRNA-based rather than protein-based catalysis; rejects L-amino acids rather than detecting D-amino acids in the active site. By recycling D-aminoacyl-tRNA to D-amino acids and free tRNA molecules, this enzyme counteracts the toxicity associated with the formation of D-aminoacyl-tRNA entities in vivo and helps enforce protein L-homochirality. This chain is D-aminoacyl-tRNA deacylase (DTD1), found in Kluyveromyces lactis (strain ATCC 8585 / CBS 2359 / DSM 70799 / NBRC 1267 / NRRL Y-1140 / WM37) (Yeast).